A 186-amino-acid chain; its full sequence is Potassium-transporting ATPase KdpC subunit (186 aa).

Residues 10–30 (LTIITMVLCGFLFPLAITLIG) traverse the membrane as a helical segment.

Belongs to the KdpC family. The system is composed of three essential subunits: KdpA, KdpB and KdpC.

The protein resides in the cell membrane. Its function is as follows. Part of the high-affinity ATP-driven potassium transport (or Kdp) system, which catalyzes the hydrolysis of ATP coupled with the electrogenic transport of potassium into the cytoplasm. This subunit acts as a catalytic chaperone that increases the ATP-binding affinity of the ATP-hydrolyzing subunit KdpB by the formation of a transient KdpB/KdpC/ATP ternary complex. The polypeptide is Potassium-transporting ATPase KdpC subunit (Staphylococcus aureus (strain bovine RF122 / ET3-1)).